The primary structure comprises 78 residues: Large ribosomal subunit protein bL28 (78 aa).

Residues 1–22 (MAKVCQVTGKRPVTGHNVSHAK) are disordered.

The protein belongs to the bacterial ribosomal protein bL28 family.

The polypeptide is Large ribosomal subunit protein bL28 (Teredinibacter turnerae (strain ATCC 39867 / T7901)).